A 427-amino-acid polypeptide reads, in one-letter code: MTEAMKITLSTQPADARWGEKATYSINNDGITLHLNGADDLGLIQRAARKIDGLGIKHVQLSGEGWDADRCWAFWQGYKAPKGTRKVEWPDLDDVQRQELDNRLMIIDWVRDTINAPAEELGPSQLAQRAVDLISNVAGDRVTYRITKGEDLRDQGYMGLHTVGRGSERSPVLLALDYNPTGDKEAPVYACLVGKGITFDSGGYSIKQTAFMDSMKSDMGGAATVTGALAFAITRGLNKRVKLFLCCADNLISGNAFKLGDIITYRNGKKVEVMNTDAEGRLVLADGLIDASAQKPELIIDAATLTGAAKTALGNDYHALFSFDDALAGRLLASAAQENEPFWRLPLAEFHRSQLPSNFAELNNTGSAAYPAGASTAAGFLSHFVENYQQGWLHIDCSATYRKAPVEQWSAGATGLGVRTIANLLTA.

Residues Lys195 and Asp200 each coordinate Mn(2+). Lys207 is an active-site residue. Residues Asp218, Asp277, and Glu279 each coordinate Mn(2+). Arg281 is an active-site residue.

It belongs to the peptidase M17 family. As to quaternary structure, homohexamer. It depends on Mn(2+) as a cofactor.

The protein resides in the cytoplasm. The catalysed reaction is Release of an N-terminal amino acid, Xaa, from a peptide or arylamide. Xaa is preferably Glu or Asp but may be other amino acids, including Leu, Met, His, Cys and Gln.. Functionally, probably plays an important role in intracellular peptide degradation. The protein is Peptidase B of Escherichia coli (strain SMS-3-5 / SECEC).